We begin with the raw amino-acid sequence, 237 residues long: Probable 2-phosphosulfolactate phosphatase (237 aa).

This sequence belongs to the ComB family. Mg(2+) serves as cofactor.

It catalyses the reaction (2R)-O-phospho-3-sulfolactate + H2O = (2R)-3-sulfolactate + phosphate. In Thermus thermophilus (strain ATCC 27634 / DSM 579 / HB8), this protein is Probable 2-phosphosulfolactate phosphatase.